Reading from the N-terminus, the 189-residue chain is Peptidyl-tRNA hydrolase (189 aa).

Residue tyrosine 14 coordinates tRNA. Catalysis depends on histidine 19, which acts as the Proton acceptor. The tRNA site is built by tyrosine 64, asparagine 66, and asparagine 112.

It belongs to the PTH family. In terms of assembly, monomer.

It localises to the cytoplasm. It catalyses the reaction an N-acyl-L-alpha-aminoacyl-tRNA + H2O = an N-acyl-L-amino acid + a tRNA + H(+). Functionally, hydrolyzes ribosome-free peptidyl-tRNAs (with 1 or more amino acids incorporated), which drop off the ribosome during protein synthesis, or as a result of ribosome stalling. Catalyzes the release of premature peptidyl moieties from peptidyl-tRNA molecules trapped in stalled 50S ribosomal subunits, and thus maintains levels of free tRNAs and 50S ribosomes. The protein is Peptidyl-tRNA hydrolase of Clostridium botulinum (strain Loch Maree / Type A3).